The following is a 184-amino-acid chain: Adenine phosphoribosyltransferase (184 aa).

This sequence belongs to the purine/pyrimidine phosphoribosyltransferase family. As to quaternary structure, homodimer.

It localises to the cytoplasm. The enzyme catalyses AMP + diphosphate = 5-phospho-alpha-D-ribose 1-diphosphate + adenine. It participates in purine metabolism; AMP biosynthesis via salvage pathway; AMP from adenine: step 1/1. Functionally, catalyzes a salvage reaction resulting in the formation of AMP, that is energically less costly than de novo synthesis. This Blochmanniella pennsylvanica (strain BPEN) protein is Adenine phosphoribosyltransferase.